The sequence spans 129 residues: Small ribosomal subunit protein uS11 (129 aa).

This sequence belongs to the universal ribosomal protein uS11 family. As to quaternary structure, part of the 30S ribosomal subunit. Interacts with proteins S7 and S18. Binds to IF-3.

Located on the platform of the 30S subunit, it bridges several disparate RNA helices of the 16S rRNA. Forms part of the Shine-Dalgarno cleft in the 70S ribosome. This Vibrio campbellii (strain ATCC BAA-1116) protein is Small ribosomal subunit protein uS11.